We begin with the raw amino-acid sequence, 110 residues long: Hydrogenase maturation factor HypA (110 aa).

Position 2 (His-2) interacts with Ni(2+). Residues Cys-70, Cys-73, Cys-86, and Cys-89 each contribute to the Zn(2+) site.

It belongs to the HypA/HybF family.

Involved in the maturation of [NiFe] hydrogenases. Required for nickel insertion into the metal center of the hydrogenase. The polypeptide is Hydrogenase maturation factor HypA (Geobacter sulfurreducens (strain ATCC 51573 / DSM 12127 / PCA)).